Reading from the N-terminus, the 341-residue chain is Phosphoribosylformylglycinamidine cyclo-ligase (341 aa).

It belongs to the AIR synthase family.

It localises to the cytoplasm. The enzyme catalyses 2-formamido-N(1)-(5-O-phospho-beta-D-ribosyl)acetamidine + ATP = 5-amino-1-(5-phospho-beta-D-ribosyl)imidazole + ADP + phosphate + H(+). The protein operates within purine metabolism; IMP biosynthesis via de novo pathway; 5-amino-1-(5-phospho-D-ribosyl)imidazole from N(2)-formyl-N(1)-(5-phospho-D-ribosyl)glycinamide: step 2/2. The polypeptide is Phosphoribosylformylglycinamidine cyclo-ligase (Finegoldia magna (strain ATCC 29328 / DSM 20472 / WAL 2508) (Peptostreptococcus magnus)).